Consider the following 91-residue polypeptide: Translation initiation factor IF-1 (91 aa).

The S1-like domain occupies 1-72 (MAKEELLEFE…DRGRINFRHK (72 aa)). The tract at residues 70–91 (RHKAEGNAPPPGARRQQNFRRR) is disordered.

It belongs to the IF-1 family. Component of the 30S ribosomal translation pre-initiation complex which assembles on the 30S ribosome in the order IF-2 and IF-3, IF-1 and N-formylmethionyl-tRNA(fMet); mRNA recruitment can occur at any time during PIC assembly.

Its subcellular location is the cytoplasm. Functionally, one of the essential components for the initiation of protein synthesis. Stabilizes the binding of IF-2 and IF-3 on the 30S subunit to which N-formylmethionyl-tRNA(fMet) subsequently binds. Helps modulate mRNA selection, yielding the 30S pre-initiation complex (PIC). Upon addition of the 50S ribosomal subunit IF-1, IF-2 and IF-3 are released leaving the mature 70S translation initiation complex. This Azorhizobium caulinodans (strain ATCC 43989 / DSM 5975 / JCM 20966 / LMG 6465 / NBRC 14845 / NCIMB 13405 / ORS 571) protein is Translation initiation factor IF-1.